The primary structure comprises 152 residues: Deoxyuridine 5'-triphosphate nucleotidohydrolase (152 aa).

Substrate is bound by residues 71–73 (RSG), Asn84, 88–90 (LID), and Met98.

Belongs to the dUTPase family. Mg(2+) serves as cofactor.

It carries out the reaction dUTP + H2O = dUMP + diphosphate + H(+). Its pathway is pyrimidine metabolism; dUMP biosynthesis; dUMP from dCTP (dUTP route): step 2/2. Its function is as follows. This enzyme is involved in nucleotide metabolism: it produces dUMP, the immediate precursor of thymidine nucleotides and it decreases the intracellular concentration of dUTP so that uracil cannot be incorporated into DNA. This Shewanella putrefaciens (strain CN-32 / ATCC BAA-453) protein is Deoxyuridine 5'-triphosphate nucleotidohydrolase.